The following is a 195-amino-acid chain: Probable DNA-directed RNA polymerase subunit delta (195 aa).

In terms of domain architecture, HTH HARE-type spans 14 to 81 (FALVEIATAI…GNNEWALRAW (68 aa)). 2 stretches are compositionally biased toward acidic residues: residues 120-172 (DDDV…DESI) and 181-195 (GGDDLDDLSDGDQEK). The tract at residues 120 to 195 (DDDVIDYNDD…DDLSDGDQEK (76 aa)) is disordered.

It belongs to the RpoE family. As to quaternary structure, RNAP is composed of a core of 2 alpha, a beta and a beta' subunits. The core is associated with a delta subunit and one of several sigma factors.

Its function is as follows. Participates in both the initiation and recycling phases of transcription. In the presence of the delta subunit, RNAP displays an increased specificity of transcription, a decreased affinity for nucleic acids, and an increased efficiency of RNA synthesis because of enhanced recycling. This chain is Probable DNA-directed RNA polymerase subunit delta, found in Leuconostoc mesenteroides subsp. mesenteroides (strain ATCC 8293 / DSM 20343 / BCRC 11652 / CCM 1803 / JCM 6124 / NCDO 523 / NBRC 100496 / NCIMB 8023 / NCTC 12954 / NRRL B-1118 / 37Y).